Reading from the N-terminus, the 211-residue chain is Xanthine phosphoribosyltransferase (211 aa).

Leu-31 and Asn-38 together coordinate xanthine. 138–142 (ANGRT) is a binding site for 5-phospho-alpha-D-ribose 1-diphosphate. Residue Lys-166 participates in xanthine binding.

This sequence belongs to the purine/pyrimidine phosphoribosyltransferase family. Xpt subfamily. Homodimer.

The protein resides in the cytoplasm. The enzyme catalyses XMP + diphosphate = xanthine + 5-phospho-alpha-D-ribose 1-diphosphate. It participates in purine metabolism; XMP biosynthesis via salvage pathway; XMP from xanthine: step 1/1. Functionally, converts the preformed base xanthine, a product of nucleic acid breakdown, to xanthosine 5'-monophosphate (XMP), so it can be reused for RNA or DNA synthesis. The sequence is that of Xanthine phosphoribosyltransferase from Chloroflexus aurantiacus (strain ATCC 29364 / DSM 637 / Y-400-fl).